The sequence spans 164 residues: Protein 4 (164 aa).

This is Protein 4 from Lettuce big-vein associated virus (isolate Japan/Kagawa) (LBVaV).